The primary structure comprises 301 residues: WD repeat-containing protein SL1-17 (301 aa).

7 WD repeats span residues A11–L54, G59–T98, G101–S140, L143–L182, G184–P223, G227–C266, and T269–C300.

The chain is WD repeat-containing protein SL1-17 from Schistosoma mansoni (Blood fluke).